The following is a 306-amino-acid chain: Agmatinase (306 aa).

Residues His126, Asp149, His151, Asp153, Asp230, and Asp232 each contribute to the Mn(2+) site.

It belongs to the arginase family. Agmatinase subfamily. Mn(2+) is required as a cofactor.

It catalyses the reaction agmatine + H2O = urea + putrescine. It functions in the pathway amine and polyamine biosynthesis; putrescine biosynthesis via agmatine pathway; putrescine from agmatine: step 1/1. Its function is as follows. Catalyzes the formation of putrescine from agmatine. The protein is Agmatinase of Shigella dysenteriae serotype 1 (strain Sd197).